A 140-amino-acid polypeptide reads, in one-letter code: Acyl-coenzyme A thioesterase 13 (140 aa).

M1 carries the post-translational modification N-acetylmethionine. N6-acetyllysine occurs at positions 27, 37, and 43. E46 contacts CoA. Substrate-binding residues include N50 and G81. CoA is bound by residues S83, 90-95 (YMSPAK), and 108-113 (KQGKTL). Residues K108 and K127 each carry the N6-acetyllysine modification. H137 serves as a coordination point for CoA.

The protein belongs to the thioesterase PaaI family. In terms of assembly, homotetramer. Interacts with PCTP. Highly expressed in the kidney and moderately in the heart, liver, brain, small and large intestine. Also expressed in brown adipose tissue.

Its subcellular location is the cytoplasm. The protein resides in the cytosol. It localises to the mitochondrion. It is found in the nucleus. The protein localises to the cytoskeleton. Its subcellular location is the spindle. It catalyses the reaction a fatty acyl-CoA + H2O = a fatty acid + CoA + H(+). It carries out the reaction decanoyl-CoA + H2O = decanoate + CoA + H(+). The catalysed reaction is octanoyl-CoA + H2O = octanoate + CoA + H(+). The enzyme catalyses butanoyl-CoA + H2O = butanoate + CoA + H(+). It catalyses the reaction hexanoyl-CoA + H2O = hexanoate + CoA + H(+). It carries out the reaction tetradecanoyl-CoA + H2O = tetradecanoate + CoA + H(+). The catalysed reaction is hexadecanoyl-CoA + H2O = hexadecanoate + CoA + H(+). The enzyme catalyses dodecanoyl-CoA + H2O = dodecanoate + CoA + H(+). It catalyses the reaction (9Z)-octadecenoyl-CoA + H2O = (9Z)-octadecenoate + CoA + H(+). Its function is as follows. Catalyzes the hydrolysis of acyl-CoAs into free fatty acids and coenzyme A (CoASH), regulating their respective intracellular levels. Has acyl-CoA thioesterase activity towards medium (C12) and long-chain (C18) fatty acyl-CoA substrates. Can also hydrolyze 3-hydroxyphenylacetyl-CoA and 3,4-dihydroxyphenylacetyl-CoA (in vitro). May play a role in controlling adaptive thermogenesis. This Mus musculus (Mouse) protein is Acyl-coenzyme A thioesterase 13.